Consider the following 602-residue polypeptide: Aspartate--tRNA(Asp/Asn) ligase (602 aa).

Glutamate 176 is a binding site for L-aspartate. The interval 200 to 203 is aspartate; the sequence is QQFK. Residues arginine 222 and histidine 452 each coordinate L-aspartate. 222-224 contacts ATP; that stretch reads RDE. Glutamate 490 serves as a coordination point for ATP. Arginine 497 serves as a coordination point for L-aspartate. 542–545 provides a ligand contact to ATP; it reads GIDR.

It belongs to the class-II aminoacyl-tRNA synthetase family. Type 1 subfamily. Homodimer.

It is found in the cytoplasm. The catalysed reaction is tRNA(Asx) + L-aspartate + ATP = L-aspartyl-tRNA(Asx) + AMP + diphosphate. Its function is as follows. Aspartyl-tRNA synthetase with relaxed tRNA specificity since it is able to aspartylate not only its cognate tRNA(Asp) but also tRNA(Asn). Reaction proceeds in two steps: L-aspartate is first activated by ATP to form Asp-AMP and then transferred to the acceptor end of tRNA(Asp/Asn). The sequence is that of Aspartate--tRNA(Asp/Asn) ligase from Rickettsia bellii (strain OSU 85-389).